The sequence spans 134 residues: MMSTLALVSLAIFGIAVVCAAPKPATVPVANEEDYLAALYGFEAPGSQFKGAPLQSKRHISPSYDVEIDAGNMRNLLDIGKRSAPMASDYGNQFQMYNRLIDAGKKKRSPAISPAYQFENAFGLSEALERAGRR.

An N-terminal signal peptide occupies residues 1–20 (MMSTLALVSLAIFGIAVVCA). A propeptide spanning residues 21–106 (APKPATVPVA…YNRLIDAGKK (86 aa)) is cleaved from the precursor. Alanine 131 is subject to Alanine amide.

This Caenorhabditis elegans protein is Neuropeptide-like peptide 11 (nlp-11).